We begin with the raw amino-acid sequence, 404 residues long: Probable tRNA sulfurtransferase (404 aa).

A THUMP domain is found at Q60 to E165. ATP-binding positions include M183–L184, H208–F209, R265, G287, and Q296.

The protein belongs to the ThiI family.

It localises to the cytoplasm. The catalysed reaction is [ThiI sulfur-carrier protein]-S-sulfanyl-L-cysteine + a uridine in tRNA + 2 reduced [2Fe-2S]-[ferredoxin] + ATP + H(+) = [ThiI sulfur-carrier protein]-L-cysteine + a 4-thiouridine in tRNA + 2 oxidized [2Fe-2S]-[ferredoxin] + AMP + diphosphate. It carries out the reaction [ThiS sulfur-carrier protein]-C-terminal Gly-Gly-AMP + S-sulfanyl-L-cysteinyl-[cysteine desulfurase] + AH2 = [ThiS sulfur-carrier protein]-C-terminal-Gly-aminoethanethioate + L-cysteinyl-[cysteine desulfurase] + A + AMP + 2 H(+). The protein operates within cofactor biosynthesis; thiamine diphosphate biosynthesis. Its function is as follows. Catalyzes the ATP-dependent transfer of a sulfur to tRNA to produce 4-thiouridine in position 8 of tRNAs, which functions as a near-UV photosensor. Also catalyzes the transfer of sulfur to the sulfur carrier protein ThiS, forming ThiS-thiocarboxylate. This is a step in the synthesis of thiazole, in the thiamine biosynthesis pathway. The sulfur is donated as persulfide by IscS. The sequence is that of Probable tRNA sulfurtransferase from Streptococcus pyogenes serotype M2 (strain MGAS10270).